A 452-amino-acid polypeptide reads, in one-letter code: Methionine aminopeptidase 2-1 (452 aa).

A disordered region spans residues 1-100 (MAAKVADDVA…VRIDEVFPND (100 aa)). Residues 37 to 51 (EHDDSDDDNEAEDGA) are compositionally biased toward acidic residues. Residues 60–73 (KKKKKRKPRKKKKA) are compositionally biased toward basic residues. A substrate-binding site is contributed by histidine 205. The a divalent metal cation site is built by aspartate 225, aspartate 236, and histidine 305. Position 313 (histidine 313) interacts with substrate. Positions 338 and 433 each coordinate a divalent metal cation.

It belongs to the peptidase M24A family. Methionine aminopeptidase eukaryotic type 2 subfamily. Requires Co(2+) as cofactor. The cofactor is Zn(2+). Mn(2+) is required as a cofactor. Fe(2+) serves as cofactor.

It is found in the cytoplasm. It carries out the reaction Release of N-terminal amino acids, preferentially methionine, from peptides and arylamides.. Cotranslationally removes the N-terminal methionine from nascent proteins. The N-terminal methionine is often cleaved when the second residue in the primary sequence is small and uncharged (Met-Ala-, Cys, Gly, Pro, Ser, Thr, or Val). This is Methionine aminopeptidase 2-1 from Pyrenophora teres f. teres (strain 0-1) (Barley net blotch fungus).